We begin with the raw amino-acid sequence, 332 residues long: Phosphate acyltransferase (332 aa).

The protein belongs to the PlsX family. Homodimer. Probably interacts with PlsY.

It is found in the cytoplasm. It catalyses the reaction a fatty acyl-[ACP] + phosphate = an acyl phosphate + holo-[ACP]. The protein operates within lipid metabolism; phospholipid metabolism. In terms of biological role, catalyzes the reversible formation of acyl-phosphate (acyl-PO(4)) from acyl-[acyl-carrier-protein] (acyl-ACP). This enzyme utilizes acyl-ACP as fatty acyl donor, but not acyl-CoA. The chain is Phosphate acyltransferase from Streptococcus sanguinis (strain SK36).